Here is a 442-residue protein sequence, read N- to C-terminus: Tubby-related protein 3 (442 aa).

A required for association with the IFT complex A (IFT-A) region spans residues 23–68; it reads MRQAKLDYQRLLLEKRQRKKRLEPFMVQPNPEARLRRAKPRASDEQ. A disordered region spans residues 101-177; the sequence is PSVSSSVVEE…TSGSATAAQP (77 aa). A compositionally biased stretch (polar residues) spans 145-162; that stretch reads GISQSACLERPNSASSQN. Low complexity predominate over residues 163 to 175; that stretch reads STDTGTSGSATAA.

It belongs to the TUB family. In terms of assembly, associates with the IFT complex A (IFT-A). Interacts with SIRT1. In terms of tissue distribution, expressed at high levels in testis, ovaries, thyroid, and spinal cord.

The protein localises to the nucleus. The protein resides in the cell membrane. It is found in the cell projection. Its subcellular location is the cilium. It localises to the cytoplasm. The protein localises to the secreted. Its function is as follows. Negative regulator of the Shh signaling transduction pathway: recruited to primary cilia via association with the IFT complex A (IFT-A) and is required for recruitment of G protein-coupled receptor GPR161 to cilia, a promoter of PKA-dependent basal repression machinery in Shh signaling. Binds to phosphorylated inositide (phosphoinositide) lipids. Both IFT-A- and phosphoinositide-binding properties are required to regulate ciliary G protein-coupled receptor trafficking. During adipogenesis, regulates ciliary trafficking of FFAR4 in preadipocytes. The protein is Tubby-related protein 3 of Homo sapiens (Human).